Reading from the N-terminus, the 296-residue chain is Lipoyl synthase (296 aa).

Positions 38, 43, 49, 64, 68, 71, and 279 each coordinate [4Fe-4S] cluster. The Radical SAM core domain occupies 50–268; the sequence is WDGGCLTFMV…AEYGRSLGFK (219 aa).

The protein belongs to the radical SAM superfamily. Lipoyl synthase family. [4Fe-4S] cluster serves as cofactor.

It localises to the cytoplasm. The enzyme catalyses [[Fe-S] cluster scaffold protein carrying a second [4Fe-4S](2+) cluster] + N(6)-octanoyl-L-lysyl-[protein] + 2 oxidized [2Fe-2S]-[ferredoxin] + 2 S-adenosyl-L-methionine + 4 H(+) = [[Fe-S] cluster scaffold protein] + N(6)-[(R)-dihydrolipoyl]-L-lysyl-[protein] + 4 Fe(3+) + 2 hydrogen sulfide + 2 5'-deoxyadenosine + 2 L-methionine + 2 reduced [2Fe-2S]-[ferredoxin]. It functions in the pathway protein modification; protein lipoylation via endogenous pathway; protein N(6)-(lipoyl)lysine from octanoyl-[acyl-carrier-protein]: step 2/2. Its function is as follows. Catalyzes the radical-mediated insertion of two sulfur atoms into the C-6 and C-8 positions of the octanoyl moiety bound to the lipoyl domains of lipoate-dependent enzymes, thereby converting the octanoylated domains into lipoylated derivatives. The polypeptide is Lipoyl synthase (Methanocella arvoryzae (strain DSM 22066 / NBRC 105507 / MRE50)).